The chain runs to 116 residues: Nucleoid-associated protein PMT9312_0020 (116 aa).

Belongs to the YbaB/EbfC family. In terms of assembly, homodimer.

The protein resides in the cytoplasm. It localises to the nucleoid. In terms of biological role, binds to DNA and alters its conformation. May be involved in regulation of gene expression, nucleoid organization and DNA protection. The sequence is that of Nucleoid-associated protein PMT9312_0020 from Prochlorococcus marinus (strain MIT 9312).